The sequence spans 269 residues: ATP synthase subunit delta (269 aa).

Belongs to the ATPase delta chain family. In terms of assembly, F-type ATPases have 2 components, F(1) - the catalytic core - and F(0) - the membrane proton channel. F(1) has five subunits: alpha(3), beta(3), gamma(1), delta(1), epsilon(1). F(0) has three main subunits: a(1), b(2) and c(10-14). The alpha and beta chains form an alternating ring which encloses part of the gamma chain. F(1) is attached to F(0) by a central stalk formed by the gamma and epsilon chains, while a peripheral stalk is formed by the delta and b chains.

It localises to the cell membrane. Its function is as follows. F(1)F(0) ATP synthase produces ATP from ADP in the presence of a proton or sodium gradient. F-type ATPases consist of two structural domains, F(1) containing the extramembraneous catalytic core and F(0) containing the membrane proton channel, linked together by a central stalk and a peripheral stalk. During catalysis, ATP synthesis in the catalytic domain of F(1) is coupled via a rotary mechanism of the central stalk subunits to proton translocation. This protein is part of the stalk that links CF(0) to CF(1). It either transmits conformational changes from CF(0) to CF(1) or is implicated in proton conduction. The protein is ATP synthase subunit delta of Nocardia farcinica (strain IFM 10152).